A 305-amino-acid chain; its full sequence is Sulfate adenylyltransferase subunit 2 (305 aa).

The protein belongs to the PAPS reductase family. CysD subfamily. Heterodimer composed of CysD, the smaller subunit, and CysN.

It carries out the reaction sulfate + ATP + H(+) = adenosine 5'-phosphosulfate + diphosphate. The protein operates within sulfur metabolism; hydrogen sulfide biosynthesis; sulfite from sulfate: step 1/3. Its function is as follows. With CysN forms the ATP sulfurylase (ATPS) that catalyzes the adenylation of sulfate producing adenosine 5'-phosphosulfate (APS) and diphosphate, the first enzymatic step in sulfur assimilation pathway. APS synthesis involves the formation of a high-energy phosphoric-sulfuric acid anhydride bond driven by GTP hydrolysis by CysN coupled to ATP hydrolysis by CysD. The sequence is that of Sulfate adenylyltransferase subunit 2 from Pseudomonas fluorescens (strain ATCC BAA-477 / NRRL B-23932 / Pf-5).